A 370-amino-acid chain; its full sequence is NADH-quinone oxidoreductase subunit D 2 (370 aa).

This sequence belongs to the complex I 49 kDa subunit family. As to quaternary structure, NDH-1 is composed of 14 different subunits. Subunits NuoB, C, D, E, F, and G constitute the peripheral sector of the complex.

It is found in the cell inner membrane. It catalyses the reaction a quinone + NADH + 5 H(+)(in) = a quinol + NAD(+) + 4 H(+)(out). NDH-1 shuttles electrons from NADH, via FMN and iron-sulfur (Fe-S) centers, to quinones in the respiratory chain. The immediate electron acceptor for the enzyme in this species is believed to be ubiquinone. Couples the redox reaction to proton translocation (for every two electrons transferred, four hydrogen ions are translocated across the cytoplasmic membrane), and thus conserves the redox energy in a proton gradient. This is NADH-quinone oxidoreductase subunit D 2 from Solibacter usitatus (strain Ellin6076).